The chain runs to 147 residues: Hemoglobin subunit epsilon (147 aa).

Residues 3 to 147 enclose the Globin domain; that stretch reads HFTAEEKAAI…VAIALGHKYH (145 aa). Serine 14 and serine 51 each carry phosphoserine. Histidine 64 and histidine 93 together coordinate heme b.

The protein belongs to the globin family. As to quaternary structure, heterotetramer of two alpha chains and two epsilon chains in early embryonic hemoglobin Gower-2; two zeta chains and two epsilon chains in early embryonic hemoglobin Gower-1. Red blood cells.

Functionally, the epsilon chain is a beta-type chain of early mammalian embryonic hemoglobin. This is Hemoglobin subunit epsilon (HBE1) from Alouatta belzebul (Red-handed howler monkey).